Reading from the N-terminus, the 324-residue chain is 7,8-didemethyl-8-hydroxy-5-deazariboflavin synthase (324 aa).

Positions 4–239 constitute a Radical SAM core domain; the sequence is VTYSKNVFIP…QEVAIQIPPN (236 aa). 3 residues coordinate [4Fe-4S] cluster: Cys18, Cys22, and Cys25.

It belongs to the radical SAM superfamily. CofG family. In terms of assembly, consists of two subunits, CofG and CofH. It depends on [4Fe-4S] cluster as a cofactor.

It catalyses the reaction 5-amino-5-(4-hydroxybenzyl)-6-(D-ribitylimino)-5,6-dihydrouracil + S-adenosyl-L-methionine = 7,8-didemethyl-8-hydroxy-5-deazariboflavin + 5'-deoxyadenosine + L-methionine + NH4(+) + H(+). It participates in cofactor biosynthesis; coenzyme F0 biosynthesis. Functionally, catalyzes the radical-mediated synthesis of 7,8-didemethyl-8-hydroxy-5-deazariboflavin from 5-amino-5-(4-hydroxybenzyl)-6-(D-ribitylimino)-5,6-dihydrouracil. This chain is 7,8-didemethyl-8-hydroxy-5-deazariboflavin synthase, found in Archaeoglobus fulgidus (strain ATCC 49558 / DSM 4304 / JCM 9628 / NBRC 100126 / VC-16).